Consider the following 236-residue polypeptide: ATP synthase subunit a (236 aa).

5 consecutive transmembrane segments (helical) span residues 18 to 38, 80 to 100, 112 to 132, 179 to 199, and 200 to 220; these read SNLL…VLCT, VTLL…AIVI, DPAI…YYGI, ILLS…IGAA, and IPML…AFIF.

It belongs to the ATPase A chain family. In terms of assembly, F-type ATPases have 2 components, CF(1) - the catalytic core - and CF(0) - the membrane proton channel. CF(1) has five subunits: alpha(3), beta(3), gamma(1), delta(1), epsilon(1). CF(0) has three main subunits: a(1), b(2) and c(9-12). The alpha and beta chains form an alternating ring which encloses part of the gamma chain. CF(1) is attached to CF(0) by a central stalk formed by the gamma and epsilon chains, while a peripheral stalk is formed by the delta and b chains.

Its subcellular location is the cell membrane. In terms of biological role, key component of the proton channel; it plays a direct role in the translocation of protons across the membrane. This Priestia megaterium (strain ATCC 12872 / QMB1551) (Bacillus megaterium) protein is ATP synthase subunit a.